The following is a 78-amino-acid chain: Acyl carrier protein (78 aa).

One can recognise a Carrier domain in the interval 2 to 77 (SDSAEKVKKI…DAIDYIEANK (76 aa)). An O-(pantetheine 4'-phosphoryl)serine modification is found at Ser37.

Belongs to the acyl carrier protein (ACP) family. Post-translationally, 4'-phosphopantetheine is transferred from CoA to a specific serine of apo-ACP by AcpS. This modification is essential for activity because fatty acids are bound in thioester linkage to the sulfhydryl of the prosthetic group.

The protein localises to the cytoplasm. It functions in the pathway lipid metabolism; fatty acid biosynthesis. In terms of biological role, carrier of the growing fatty acid chain in fatty acid biosynthesis. This Sphingopyxis alaskensis (strain DSM 13593 / LMG 18877 / RB2256) (Sphingomonas alaskensis) protein is Acyl carrier protein.